The following is a 125-amino-acid chain: uncharacterized protein (125 aa).

A run of 2 helical transmembrane segments spans residues 28-48 (VFIT…SQFC) and 54-74 (FFLP…LFFF).

The protein resides in the membrane. This is an uncharacterized protein from Saccharomyces cerevisiae (strain ATCC 204508 / S288c) (Baker's yeast).